The sequence spans 220 residues: Competence protein ComFC (220 aa).

The protein belongs to the ComF/GntX family. As to quaternary structure, monomer and dimer in solution. Interacts with ComFA and DprA; ComFA-ComFC form rings about 150 Angstroms in diameter with apparent 6-fold symmetry.

Functionally, involved in transformation (genetic competence for DNA uptake). This chain is Competence protein ComFC, found in Streptococcus pneumoniae (strain ATCC BAA-255 / R6).